Here is a 198-residue protein sequence, read N- to C-terminus: Recombination protein RecR (198 aa).

The C4-type zinc finger occupies 57-72 (CSICGRLTDDDPCSIC). Positions 80–175 (TTILVLEDSR…KVTRLARGLA (96 aa)) constitute a Toprim domain.

The protein belongs to the RecR family.

Its function is as follows. May play a role in DNA repair. It seems to be involved in an RecBC-independent recombinational process of DNA repair. It may act with RecF and RecO. The protein is Recombination protein RecR of Streptococcus pneumoniae (strain 70585).